The primary structure comprises 154 residues: Deoxyuridine 5'-triphosphate nucleotidohydrolase (154 aa).

Residues 64–66 (RSG), Asn77, 81–83 (TVD), and Lys91 contribute to the substrate site. A disordered region spans residues 135–154 (LADTTRGDGGHGSSGGHASL). Gly residues predominate over residues 144–154 (GHGSSGGHASL).

It belongs to the dUTPase family. In terms of assembly, homotrimer. It depends on Mg(2+) as a cofactor.

The enzyme catalyses dUTP + H2O = dUMP + diphosphate + H(+). Its pathway is pyrimidine metabolism; dUMP biosynthesis; dUMP from dCTP (dUTP route): step 2/2. This enzyme is involved in nucleotide metabolism: it produces dUMP, the immediate precursor of thymidine nucleotides and it decreases the intracellular concentration of dUTP so that uracil cannot be incorporated into DNA. This chain is Deoxyuridine 5'-triphosphate nucleotidohydrolase, found in Mycolicibacterium vanbaalenii (strain DSM 7251 / JCM 13017 / BCRC 16820 / KCTC 9966 / NRRL B-24157 / PYR-1) (Mycobacterium vanbaalenii).